Here is a 195-residue protein sequence, read N- to C-terminus: ATP-dependent Clp protease proteolytic subunit (195 aa).

Ser98 (nucleophile) is an active-site residue. His123 is a catalytic residue.

The protein belongs to the peptidase S14 family. In terms of assembly, fourteen ClpP subunits assemble into 2 heptameric rings which stack back to back to give a disk-like structure with a central cavity, resembling the structure of eukaryotic proteasomes.

The protein resides in the cytoplasm. It catalyses the reaction Hydrolysis of proteins to small peptides in the presence of ATP and magnesium. alpha-casein is the usual test substrate. In the absence of ATP, only oligopeptides shorter than five residues are hydrolyzed (such as succinyl-Leu-Tyr-|-NHMec, and Leu-Tyr-Leu-|-Tyr-Trp, in which cleavage of the -Tyr-|-Leu- and -Tyr-|-Trp bonds also occurs).. Functionally, cleaves peptides in various proteins in a process that requires ATP hydrolysis. Has a chymotrypsin-like activity. Plays a major role in the degradation of misfolded proteins. The sequence is that of ATP-dependent Clp protease proteolytic subunit from Helicobacter pylori (strain G27).